The following is a 654-amino-acid chain: Marinolic acid--CoA ligase (654 aa).

The protein belongs to the ATP-dependent AMP-binding enzyme family.

It carries out the reaction ATP + a marinolic acid + CoA = AMP + diphosphate + a marinoloyl-CoA.. It catalyses the reaction ATP + a pseudomonic acid + CoA = AMP + diphosphate + a pseudomonoyl-CoA.. The enzyme catalyses marinolate C + ATP + CoA = marinoloyl-CoA C + AMP + diphosphate. The catalysed reaction is pseudomonate C + ATP + CoA = pseudomonoyl-CoA C + AMP + diphosphate. Its pathway is antibiotic biosynthesis. Its function is as follows. Acyl-CoA ligase that catalyzes the CoA acylation of pseudomonate C, leading to the formation of pseudomonoyl-CoA C (PAC-CoA). Also shows high activity with pseudomonoyl-CoA A as substrate. In addition, can activate acetic, octanoic, 2,4-dodecadienoic and 2,4-decadienoic acids, although with much lower activity. In vivo, is probably involved in the biosynthesis of thiomarinol, a naturally occurring double-headed antibiotic. The chain is Marinolic acid--CoA ligase from Pseudoalteromonas sp. (strain SANK 73390).